A 249-amino-acid chain; its full sequence is NAD-dependent protein deacylase 2 (249 aa).

One can recognise a Deacetylase sirtuin-type domain in the interval 1-240 (MNVADLLASS…PRLVEEVKRR (240 aa)). Position 18–37 (18–37 (GAGISAESGVPTFRGPGGLW)) interacts with NAD(+). Residues Tyr-62 and Arg-65 each contribute to the substrate site. 96-99 (QNVD) contributes to the NAD(+) binding site. The Proton acceptor role is filled by His-114. Zn(2+) contacts are provided by Cys-122, Cys-125, Cys-142, and Cys-145. Residues 182–184 (GTS), 208–210 (NVE), and Ala-226 contribute to the NAD(+) site.

It belongs to the sirtuin family. Class III subfamily. Requires Zn(2+) as cofactor.

The protein localises to the cytoplasm. The catalysed reaction is N(6)-acetyl-L-lysyl-[protein] + NAD(+) + H2O = 2''-O-acetyl-ADP-D-ribose + nicotinamide + L-lysyl-[protein]. It carries out the reaction N(6)-succinyl-L-lysyl-[protein] + NAD(+) + H2O = 2''-O-succinyl-ADP-D-ribose + nicotinamide + L-lysyl-[protein]. NAD-dependent lysine deacetylase and desuccinylase that specifically removes acetyl and succinyl groups on target proteins. Modulates the activities of several proteins which are inactive in their acylated form. Deacetylates the N-terminal lysine residue of Alba, the major archaeal chromatin protein and that, in turn, increases Alba's DNA binding affinity, thereby repressing transcription. The chain is NAD-dependent protein deacylase 2 from Pyrobaculum aerophilum (strain ATCC 51768 / DSM 7523 / JCM 9630 / CIP 104966 / NBRC 100827 / IM2).